The sequence spans 302 residues: Ectoine dioxygenase (302 aa).

Glutamine 128 is a binding site for L-ectoine. Lysine 134 serves as a coordination point for 2-oxoglutarate. Fe cation-binding residues include histidine 145, aspartate 147, and histidine 246.

This sequence belongs to the PhyH family. EctD subfamily. As to quaternary structure, homodimer. Requires Fe(2+) as cofactor.

It catalyses the reaction L-ectoine + 2-oxoglutarate + O2 = 5-hydroxyectoine + succinate + CO2. In terms of biological role, involved in the biosynthesis of 5-hydroxyectoine, called compatible solute, which helps organisms to survive extreme osmotic stress by acting as a highly soluble organic osmolyte. Catalyzes the 2-oxoglutarate-dependent selective hydroxylation of L-ectoine to yield (4S,5S)-5-hydroxyectoine. The protein is Ectoine dioxygenase of Stutzerimonas stutzeri (strain A1501) (Pseudomonas stutzeri).